Here is a 284-residue protein sequence, read N- to C-terminus: D-tagatose-1,6-bisphosphate aldolase subunit GatY (284 aa).

The active-site Proton donor is the Asp-82. Zn(2+) contacts are provided by His-83 and His-180. Gly-181 provides a ligand contact to dihydroxyacetone phosphate. Residue His-208 coordinates Zn(2+). Dihydroxyacetone phosphate is bound by residues 209 to 211 (GAS) and 230 to 233 (NVAT).

It belongs to the class II fructose-bisphosphate aldolase family. TagBP aldolase GatY subfamily. Forms a complex with GatZ. The cofactor is Zn(2+).

It catalyses the reaction D-tagatofuranose 1,6-bisphosphate = D-glyceraldehyde 3-phosphate + dihydroxyacetone phosphate. The protein operates within carbohydrate metabolism; D-tagatose 6-phosphate degradation; D-glyceraldehyde 3-phosphate and glycerone phosphate from D-tagatose 6-phosphate: step 2/2. Catalytic subunit of the tagatose-1,6-bisphosphate aldolase GatYZ, which catalyzes the reversible aldol condensation of dihydroxyacetone phosphate (DHAP or glycerone-phosphate) with glyceraldehyde 3-phosphate (G3P) to produce tagatose 1,6-bisphosphate (TBP). Requires GatZ subunit for full activity and stability. Is involved in the catabolism of galactitol. The polypeptide is D-tagatose-1,6-bisphosphate aldolase subunit GatY (Shigella dysenteriae serotype 1 (strain Sd197)).